A 380-amino-acid polypeptide reads, in one-letter code: Succinyl-diaminopimelate desuccinylase (380 aa).

His-69 contributes to the Zn(2+) binding site. The active site involves Asp-71. A Zn(2+)-binding site is contributed by Asp-102. Glu-135 functions as the Proton acceptor in the catalytic mechanism. Residues Glu-136, Glu-164, and His-353 each coordinate Zn(2+).

This sequence belongs to the peptidase M20A family. DapE subfamily. In terms of assembly, homodimer. Zn(2+) serves as cofactor. Co(2+) is required as a cofactor.

It catalyses the reaction N-succinyl-(2S,6S)-2,6-diaminopimelate + H2O = (2S,6S)-2,6-diaminopimelate + succinate. The protein operates within amino-acid biosynthesis; L-lysine biosynthesis via DAP pathway; LL-2,6-diaminopimelate from (S)-tetrahydrodipicolinate (succinylase route): step 3/3. Its function is as follows. Catalyzes the hydrolysis of N-succinyl-L,L-diaminopimelic acid (SDAP), forming succinate and LL-2,6-diaminopimelate (DAP), an intermediate involved in the bacterial biosynthesis of lysine and meso-diaminopimelic acid, an essential component of bacterial cell walls. The protein is Succinyl-diaminopimelate desuccinylase of Cereibacter sphaeroides (strain ATCC 17023 / DSM 158 / JCM 6121 / CCUG 31486 / LMG 2827 / NBRC 12203 / NCIMB 8253 / ATH 2.4.1.) (Rhodobacter sphaeroides).